A 363-amino-acid chain; its full sequence is Insulin gene enhancer protein ISL-3 (363 aa).

LIM zinc-binding domains follow at residues 27–80 and 89–143; these read CVGC…CKRD and CAKC…RADH. Residues 191-250 constitute a DNA-binding region (homeobox); sequence TTRVRTVLNEKQLHTLRTCYNANPRPDALMREQLVEMTGLSPRVIRVWFQNKRCKDKKRS. The segment at 328-363 is disordered; that stretch reads FSESGSLGNSSGSDVTSLSSHLPDTPNSMVPSPVET. Residues 329–340 show a composition bias toward low complexity; the sequence is SESGSLGNSSGS. The segment covering 341–363 has biased composition (polar residues); sequence DVTSLSSHLPDTPNSMVPSPVET.

The protein resides in the nucleus. Functionally, binds to one of the cis-acting domain of the insulin gene enhancer. May be involved in subtype specialization of primary motoneurons. This chain is Insulin gene enhancer protein ISL-3 (isl3), found in Oncorhynchus tshawytscha (Chinook salmon).